The sequence spans 193 residues: uncharacterized protein (193 aa).

The next 4 helical transmembrane spans lie at 8–28, 46–66, 82–102, and 141–161; these read GVLVGGLWAWIAPPIHAVVAI, FFIAPFMLLGLLSVLAVVASA, GLSIGLTTAAAIAAGVGALVV, and IALTLMWPAGIASLVYALLAA.

It to M.leprae ML1222.

Its subcellular location is the cell membrane. This is an uncharacterized protein from Mycobacterium tuberculosis (strain CDC 1551 / Oshkosh).